Reading from the N-terminus, the 366-residue chain is Gelsolin-like protein 2 (366 aa).

3 Gelsolin-like repeats span residues 55–139, 177–252, and 286–327; these read NFKV…DLFL, KHIV…HEFY, and KSTV…AQEK. An actin binding region spans residues 100 to 116; the sequence is KSTQDEYCVAAYKTVEL. The tract at residues 104–107 is actin-actin interfilament contact point; the sequence is DEYC.

It belongs to the villin/gelsolin family. Interacts with actin monomers and filaments. As to expression, expressed in circular and longitudinal muscle, pseudohearts, pharynx and gizzard. Not expressed in seminal vesicles.

Its subcellular location is the cytoplasm. The protein resides in the cytoskeleton. Functionally, calcium-regulated protein that binds to the plus (or barbed) ends of actin monomers or filaments, preventing monomer exchange (end-blocking or capping). Can promote the assembly of monomers into filaments (nucleation) as well as sever existing filaments. This chain is Gelsolin-like protein 2, found in Lumbricus terrestris (Common earthworm).